The following is a 103-amino-acid chain: DNA-directed RNA polymerase subunit omega (103 aa).

It belongs to the RNA polymerase subunit omega family. As to quaternary structure, the RNAP catalytic core consists of 2 alpha, 1 beta, 1 beta' and 1 omega subunit. When a sigma factor is associated with the core the holoenzyme is formed, which can initiate transcription.

The enzyme catalyses RNA(n) + a ribonucleoside 5'-triphosphate = RNA(n+1) + diphosphate. In terms of biological role, promotes RNA polymerase assembly. Latches the N- and C-terminal regions of the beta' subunit thereby facilitating its interaction with the beta and alpha subunits. This chain is DNA-directed RNA polymerase subunit omega, found in Streptococcus agalactiae serotype III (strain NEM316).